The primary structure comprises 884 residues: Protein translocase subunit SecA (884 aa).

ATP contacts are provided by residues Q88, 106 to 110 (GEGKT), and D509. The interval 822–884 (EQKKLKMSGA…PKKGLFANND (63 aa)) is disordered. The segment covering 833 to 842 (KGGEDLEETK) has biased composition (basic and acidic residues). Residues C858, C860, C869, and H870 each contribute to the Zn(2+) site.

It belongs to the SecA family. As to quaternary structure, monomer and homodimer. Part of the essential Sec protein translocation apparatus which comprises SecA, SecYEG and auxiliary proteins SecDF-YajC and YidC. Zn(2+) serves as cofactor.

The protein localises to the cell inner membrane. Its subcellular location is the cytoplasm. The catalysed reaction is ATP + H2O + cellular proteinSide 1 = ADP + phosphate + cellular proteinSide 2.. Part of the Sec protein translocase complex. Interacts with the SecYEG preprotein conducting channel. Has a central role in coupling the hydrolysis of ATP to the transfer of proteins into and across the cell membrane, serving as an ATP-driven molecular motor driving the stepwise translocation of polypeptide chains across the membrane. The chain is Protein translocase subunit SecA from Campylobacter hominis (strain ATCC BAA-381 / DSM 21671 / CCUG 45161 / LMG 19568 / NCTC 13146 / CH001A).